The chain runs to 532 residues: Light-independent protochlorophyllide reductase subunit B (532 aa).

Asp36 contributes to the [4Fe-4S] cluster binding site. Asp318 (proton donor) is an active-site residue. A substrate-binding site is contributed by 453–454 (GM).

This sequence belongs to the ChlB/BchB/BchZ family. Protochlorophyllide reductase is composed of three subunits; ChlL, ChlN and ChlB. Forms a heterotetramer of two ChlB and two ChlN subunits. It depends on [4Fe-4S] cluster as a cofactor.

The protein resides in the plastid. Its subcellular location is the chloroplast. It carries out the reaction chlorophyllide a + oxidized 2[4Fe-4S]-[ferredoxin] + 2 ADP + 2 phosphate = protochlorophyllide a + reduced 2[4Fe-4S]-[ferredoxin] + 2 ATP + 2 H2O. The protein operates within porphyrin-containing compound metabolism; chlorophyll biosynthesis (light-independent). Functionally, component of the dark-operative protochlorophyllide reductase (DPOR) that uses Mg-ATP and reduced ferredoxin to reduce ring D of protochlorophyllide (Pchlide) to form chlorophyllide a (Chlide). This reaction is light-independent. The NB-protein (ChlN-ChlB) is the catalytic component of the complex. This Tetradesmus obliquus (Green alga) protein is Light-independent protochlorophyllide reductase subunit B.